Consider the following 334-residue polypeptide: N-acetyl-gamma-glutamyl-phosphate reductase (334 aa).

Residue Cys154 is part of the active site.

This sequence belongs to the NAGSA dehydrogenase family. Type 1 subfamily.

The protein resides in the cytoplasm. It carries out the reaction N-acetyl-L-glutamate 5-semialdehyde + phosphate + NADP(+) = N-acetyl-L-glutamyl 5-phosphate + NADPH + H(+). It functions in the pathway amino-acid biosynthesis; L-arginine biosynthesis; N(2)-acetyl-L-ornithine from L-glutamate: step 3/4. Its function is as follows. Catalyzes the NADPH-dependent reduction of N-acetyl-5-glutamyl phosphate to yield N-acetyl-L-glutamate 5-semialdehyde. The sequence is that of N-acetyl-gamma-glutamyl-phosphate reductase from Vibrio vulnificus (strain YJ016).